We begin with the raw amino-acid sequence, 176 residues long: Japanin (176 aa).

The N-terminal stretch at 1 to 24 (MKVLRCLVCSFYIIVSLITTMTIG) is a signal peptide. Glu47 contributes to the cholesterol binding site. 2 disulfides stabilise this stretch: Cys52/Cys174 and Cys138/Cys162. Asn59 and Asn155 each carry an N-linked (GlcNAc...) asparagine glycan.

This sequence belongs to the calycin superfamily. Lipocalin family. As to quaternary structure, homodimer; non-disulfide-linked. Each monomer accommodates one molecule of cholesterol in a pocket. As to expression, expressed in salivary glands.

The protein resides in the secreted. In terms of biological role, salivary tick protein that modulates host immune response. This protein blocks dendritic cell (DC) differentiation from monocytes. In addition, it inhibits up-regulation of costimulatory molecules and pro-inflammatory cytokines in response to stimuli and promotes up-regulation of co-inhibitory molecules and the anti-inflammatory cytokine interleukin-10. It has a pocket to accomodate cholesterol, which may have immune-modulatory roles, either directly or through interactions with the host gut microbiota. This is Japanin from Rhipicephalus appendiculatus (Brown ear tick).